Consider the following 231-residue polypeptide: Lipoprotein-releasing system ATP-binding protein LolD (231 aa).

One can recognise an ABC transporter domain in the interval 6-230 (LSCKNVSKKY…DGELELVINS (225 aa)). Residue 42-49 (GLSGSGKT) coordinates ATP.

The protein belongs to the ABC transporter superfamily. Lipoprotein translocase (TC 3.A.1.125) family. The complex is composed of two ATP-binding proteins (LolD) and two transmembrane proteins (LolC and LolE).

It localises to the cell inner membrane. Functionally, part of the ABC transporter complex LolCDE involved in the translocation of mature outer membrane-directed lipoproteins, from the inner membrane to the periplasmic chaperone, LolA. Responsible for the formation of the LolA-lipoprotein complex in an ATP-dependent manner. The chain is Lipoprotein-releasing system ATP-binding protein LolD from Francisella tularensis subsp. holarctica (strain OSU18).